The primary structure comprises 436 residues: Peptidase B (436 aa).

Mn(2+) is bound by residues K201 and D206. K213 is a catalytic residue. Residues D224, D283, and E285 each contribute to the Mn(2+) site. The active site involves R287.

Belongs to the peptidase M17 family. In terms of assembly, homohexamer. It depends on Mn(2+) as a cofactor.

The protein resides in the cytoplasm. The enzyme catalyses Release of an N-terminal amino acid, Xaa, from a peptide or arylamide. Xaa is preferably Glu or Asp but may be other amino acids, including Leu, Met, His, Cys and Gln.. Probably plays an important role in intracellular peptide degradation. This is Peptidase B from Pectobacterium carotovorum subsp. carotovorum (strain PC1).